The primary structure comprises 408 residues: MAENFVVVDGGVVAPKGFKSNGHKDRKYGAALIYSETDAVAAGVFTTNKVFAHPVALSKDVLVNNNVFRAIVANSGNANCFTKGGMEDAELLVKKAAELLKIPENQVLSASTGVIGRKMPMDIITLEVERAFENMDLENSNENASKAIMTTDAFPKTVAVEFEVKDKKIRIGGIAKGAGMIAPNMLHATMLGFITTDIEISKEDLTNSLQKATDESFNNAVVDGDMSTNDTVYVLANAQSGVKYTDCKDEFDEALTYVSKELAKMIVSDGEGAKKLIEATVYGAETKEDAKKASMSIVRSLLLKTAFFGADPNWGRIAAAVGYSGAEMDMANFDIIIGDISSEKQAILVKAGEQIADCGTPELKLAEEIMKEDKIKIIVDLKMGSFENTAFGCDLGYEYVKINSEYTT.

Substrate-binding residues include T150, K176, T189, E271, N403, and T408. T189 functions as the Nucleophile in the catalytic mechanism.

It belongs to the ArgJ family. In terms of assembly, heterotetramer of two alpha and two beta chains.

It localises to the cytoplasm. The catalysed reaction is N(2)-acetyl-L-ornithine + L-glutamate = N-acetyl-L-glutamate + L-ornithine. It functions in the pathway amino-acid biosynthesis; L-arginine biosynthesis; L-ornithine and N-acetyl-L-glutamate from L-glutamate and N(2)-acetyl-L-ornithine (cyclic): step 1/1. In terms of biological role, catalyzes the transfer of the acetyl group from N(2)-acetylornithine to glutamate, forming N-acetylglutamate and L-ornithine. In Methanococcus maripaludis (strain C5 / ATCC BAA-1333), this protein is Glutamate N-acetyltransferase.